Here is a 456-residue protein sequence, read N- to C-terminus: Membrane-bound lytic murein transglycosylase F (456 aa).

Positions 1 to 22 (MKTWPSRAVSLLLLALALPVGC) are cleaved as a signal peptide. The segment at 23–267 (SEPPPPVRDP…ALDETWFGRF (245 aa)) is non-LT domain. An LT domain region spans residues 268 to 456 (GDYDYVDVAR…YRALLAAQDL (189 aa)). Residue Glu-314 is part of the active site.

This sequence in the N-terminal section; belongs to the bacterial solute-binding protein 3 family. In the C-terminal section; belongs to the transglycosylase Slt family.

The protein localises to the cell outer membrane. It catalyses the reaction Exolytic cleavage of the (1-&gt;4)-beta-glycosidic linkage between N-acetylmuramic acid (MurNAc) and N-acetylglucosamine (GlcNAc) residues in peptidoglycan, from either the reducing or the non-reducing ends of the peptidoglycan chains, with concomitant formation of a 1,6-anhydrobond in the MurNAc residue.. Its function is as follows. Murein-degrading enzyme that degrades murein glycan strands and insoluble, high-molecular weight murein sacculi, with the concomitant formation of a 1,6-anhydromuramoyl product. Lytic transglycosylases (LTs) play an integral role in the metabolism of the peptidoglycan (PG) sacculus. Their lytic action creates space within the PG sacculus to allow for its expansion as well as for the insertion of various structures such as secretion systems and flagella. In Maricaulis maris (strain MCS10) (Caulobacter maris), this protein is Membrane-bound lytic murein transglycosylase F.